The chain runs to 274 residues: Putative pyruvate, phosphate dikinase regulatory protein 1 (274 aa).

An ADP-binding site is contributed by 149–156 (GISRTSKT).

Belongs to the pyruvate, phosphate/water dikinase regulatory protein family. PDRP subfamily.

It carries out the reaction N(tele)-phospho-L-histidyl/L-threonyl-[pyruvate, phosphate dikinase] + ADP = N(tele)-phospho-L-histidyl/O-phospho-L-threonyl-[pyruvate, phosphate dikinase] + AMP + H(+). The catalysed reaction is N(tele)-phospho-L-histidyl/O-phospho-L-threonyl-[pyruvate, phosphate dikinase] + phosphate + H(+) = N(tele)-phospho-L-histidyl/L-threonyl-[pyruvate, phosphate dikinase] + diphosphate. In terms of biological role, bifunctional serine/threonine kinase and phosphorylase involved in the regulation of the pyruvate, phosphate dikinase (PPDK) by catalyzing its phosphorylation/dephosphorylation. The sequence is that of Putative pyruvate, phosphate dikinase regulatory protein 1 from Listeria monocytogenes serotype 4b (strain F2365).